We begin with the raw amino-acid sequence, 146 residues long: D-aminoacyl-tRNA deacylase (146 aa).

The short motif at 138–139 (GP) is the Gly-cisPro motif, important for rejection of L-amino acids element.

This sequence belongs to the DTD family. As to quaternary structure, homodimer.

The protein resides in the cytoplasm. The catalysed reaction is glycyl-tRNA(Ala) + H2O = tRNA(Ala) + glycine + H(+). It catalyses the reaction a D-aminoacyl-tRNA + H2O = a tRNA + a D-alpha-amino acid + H(+). In terms of biological role, an aminoacyl-tRNA editing enzyme that deacylates mischarged D-aminoacyl-tRNAs. Also deacylates mischarged glycyl-tRNA(Ala), protecting cells against glycine mischarging by AlaRS. Acts via tRNA-based rather than protein-based catalysis; rejects L-amino acids rather than detecting D-amino acids in the active site. By recycling D-aminoacyl-tRNA to D-amino acids and free tRNA molecules, this enzyme counteracts the toxicity associated with the formation of D-aminoacyl-tRNA entities in vivo and helps enforce protein L-homochirality. This is D-aminoacyl-tRNA deacylase from Stenotrophomonas maltophilia (strain R551-3).